A 389-amino-acid polypeptide reads, in one-letter code: Acetylornithine aminotransferase (389 aa).

Pyridoxal 5'-phosphate-binding positions include 96–97 (GT) and Phe123. Arg126 serves as a coordination point for N(2)-acetyl-L-ornithine. 207–210 (DEVQ) serves as a coordination point for pyridoxal 5'-phosphate. Lys236 is modified (N6-(pyridoxal phosphate)lysine). A N(2)-acetyl-L-ornithine-binding site is contributed by Ser264. Residue Thr265 coordinates pyridoxal 5'-phosphate.

Belongs to the class-III pyridoxal-phosphate-dependent aminotransferase family. ArgD subfamily. Homodimer. The cofactor is pyridoxal 5'-phosphate.

The protein localises to the cytoplasm. The enzyme catalyses N(2)-acetyl-L-ornithine + 2-oxoglutarate = N-acetyl-L-glutamate 5-semialdehyde + L-glutamate. It functions in the pathway amino-acid biosynthesis; L-arginine biosynthesis; N(2)-acetyl-L-ornithine from L-glutamate: step 4/4. This chain is Acetylornithine aminotransferase, found in Lactiplantibacillus plantarum (strain ATCC BAA-793 / NCIMB 8826 / WCFS1) (Lactobacillus plantarum).